The sequence spans 149 residues: NPC intracellular cholesterol transporter 2 (149 aa).

The N-terminal stretch at 1–19 is a signal peptide; sequence MRFLTVAFLFLALSASALA. Disulfide bonds link cysteine 27–cysteine 140, cysteine 42–cysteine 47, and cysteine 93–cysteine 99. A glycan (N-linked (GlcNAc...) asparagine) is linked at asparagine 58. Lysine 116 is subject to N6-acetyllysine.

This sequence belongs to the NPC2 family. Interacts with NPC1 (via the second lumenal domain) in a cholestrol-dependent manner. Interacts with NUS1/NgBR, the interaction stabilizes NCP2 and regulates cholesterol trafficking. Interacts with DHDDS. Interacts with NEDD4L (via C2 domain). Interacts with NPC1L1. Expressed in kidney, spleen, liver and mammary gland, but not in testis.

It is found in the secreted. It localises to the endoplasmic reticulum. The protein resides in the lysosome. It carries out the reaction cholesterol(in) = cholesterol(out). Its function is as follows. Intracellular cholesterol transporter which acts in concert with NPC1 and plays an important role in the egress of cholesterol from the lysosomal compartment. Unesterified cholesterol that has been released from LDLs in the lumen of the late endosomes/lysosomes is transferred by NPC2 to the cholesterol-binding pocket in the N-terminal domain of NPC1. May bind and mobilize cholesterol that is associated with membranes. NPC2 binds cholesterol with a 1:1 stoichiometry. Can bind a variety of sterols, including lathosterol, desmosterol and the plant sterols stigmasterol and beta-sitosterol. The secreted form of NCP2 regulates biliary cholesterol secretion via stimulation of ABCG5/ABCG8-mediated cholesterol transport. In Bos taurus (Bovine), this protein is NPC intracellular cholesterol transporter 2.